The sequence spans 226 residues: SPI-1 type 3 secretion system stator protein (226 aa).

In terms of assembly, the core secretion machinery of the T3SS is composed of approximately 20 different proteins, including cytoplasmic components, a base, an export apparatus and a needle. This subunit is part of the cytosolic complex. Interacts directly with InvC/SctN1 (T3SS-1 ATPase) and SpaO/SctQ (the major sorting platform component).

It localises to the cytoplasm. Its function is as follows. Component of the type III secretion system (T3SS), also called injectisome, which is used to inject bacterial effector proteins into eukaryotic host cells. Acts as a regulator of the InvC/SctN1 ATPase activity. Required for invasion and secretion. The polypeptide is SPI-1 type 3 secretion system stator protein (Salmonella typhimurium (strain SL1344)).